We begin with the raw amino-acid sequence, 85 residues long: Putative defensin-like protein 258 (85 aa).

The first 25 residues, 1–25 (MINVSLKRSLLIFISVITSNIGSEA), serve as a signal peptide directing secretion. 3 cysteine pairs are disulfide-bonded: Cys-57–Cys-75, Cys-63–Cys-82, and Cys-67–Cys-84.

Belongs to the DEFL family.

Its subcellular location is the secreted. The chain is Putative defensin-like protein 258 from Arabidopsis thaliana (Mouse-ear cress).